The primary structure comprises 240 residues: Uridylate kinase (240 aa).

Residue 15–18 (KLSG) coordinates ATP. The tract at residues 23-28 (GSEGFG) is involved in allosteric activation by GTP. A UMP-binding site is contributed by glycine 57. Residues glycine 58 and arginine 62 each contribute to the ATP site. UMP-binding positions include aspartate 77 and 138-145 (TGNPFFTT). Threonine 165, tyrosine 171, and aspartate 174 together coordinate ATP.

This sequence belongs to the UMP kinase family. In terms of assembly, homohexamer.

Its subcellular location is the cytoplasm. It carries out the reaction UMP + ATP = UDP + ADP. Its pathway is pyrimidine metabolism; CTP biosynthesis via de novo pathway; UDP from UMP (UMPK route): step 1/1. Its activity is regulated as follows. Allosterically activated by GTP. Inhibited by UTP. Catalyzes the reversible phosphorylation of UMP to UDP. The sequence is that of Uridylate kinase from Photobacterium profundum (strain SS9).